The sequence spans 379 residues: 3-dehydroquinate synthase (379 aa).

NAD(+) is bound by residues 67 to 72, 101 to 105, 125 to 126, K138, and K147; these read PGEKNK, GIILD, and TT. The Zn(2+) site is built by E180, H242, and H258.

It belongs to the sugar phosphate cyclases superfamily. Dehydroquinate synthase family. The cofactor is NAD(+). Co(2+) is required as a cofactor. Zn(2+) serves as cofactor.

The protein resides in the cytoplasm. It carries out the reaction 7-phospho-2-dehydro-3-deoxy-D-arabino-heptonate = 3-dehydroquinate + phosphate. Its pathway is metabolic intermediate biosynthesis; chorismate biosynthesis; chorismate from D-erythrose 4-phosphate and phosphoenolpyruvate: step 2/7. Functionally, catalyzes the conversion of 3-deoxy-D-arabino-heptulosonate 7-phosphate (DAHP) to dehydroquinate (DHQ). The sequence is that of 3-dehydroquinate synthase from Chlamydia caviae (strain ATCC VR-813 / DSM 19441 / 03DC25 / GPIC) (Chlamydophila caviae).